The sequence spans 87 residues: Small ribosomal subunit protein uS17 (87 aa).

This sequence belongs to the universal ribosomal protein uS17 family. Part of the 30S ribosomal subunit.

One of the primary rRNA binding proteins, it binds specifically to the 5'-end of 16S ribosomal RNA. The polypeptide is Small ribosomal subunit protein uS17 (Geobacillus kaustophilus (strain HTA426)).